The chain runs to 293 residues: Small ribosomal subunit biogenesis GTPase RsgA (293 aa).

A CP-type G domain is found at 63-223 (KNELVRPPIA…VADTPGFSSL (161 aa)). GTP contacts are provided by residues 112 to 115 (SKMD) and 166 to 174 (GQSGVGKSS). Positions 247, 252, 254, and 260 each coordinate Zn(2+).

Belongs to the TRAFAC class YlqF/YawG GTPase family. RsgA subfamily. In terms of assembly, monomer. Associates with 30S ribosomal subunit, binds 16S rRNA. The cofactor is Zn(2+).

It is found in the cytoplasm. Functionally, one of several proteins that assist in the late maturation steps of the functional core of the 30S ribosomal subunit. Helps release RbfA from mature subunits. May play a role in the assembly of ribosomal proteins into the subunit. Circularly permuted GTPase that catalyzes slow GTP hydrolysis, GTPase activity is stimulated by the 30S ribosomal subunit. The chain is Small ribosomal subunit biogenesis GTPase RsgA from Bacillus cytotoxicus (strain DSM 22905 / CIP 110041 / 391-98 / NVH 391-98).